Reading from the N-terminus, the 455-residue chain is MGQTLFDKVWNRHVLYGKLGEPQLLYIDLHLIHEVTSPQAFEGLRLQNRKLRRPDLTFATLDHNVPTIDIFNIKDEIANKQITTLQKNAIDFGVHIFDMGSDEQGIVHMVGPETGLTQPGKTIVCGDSHTATHGAFGAIAFGIGTSEVEHVFATQTLWQTKPKNLKIDINGTLPTGVYAKDIILHLIKTYGVDFGTGYALEFTGETIKNLSMDGRMTICNMAIEGGAKYGIIQPDDITFEYVKGRPFADNFAKSVDKWRELYSNDDAIFDRVIELDVSTLEPQVTWGTNPEMGVNFSEPFPEINDINDQRAYDYMGLEPGQKAEDIDLGYVFLGSCTNARLSDLIEASHIVKGNKVHPNITAIVVPGSRTVKKEAEKLGLDTIFKNAGFEWREPGCSMCLGMNPDQVPEGVHCASTSNRNFEGRQGKGARTHLVSPAMAAAAIHGKFVDVRKVVV.

[4Fe-4S] cluster-binding residues include Cys-336, Cys-396, and Cys-399.

Belongs to the aconitase/IPM isomerase family. LeuC type 1 subfamily. Heterodimer of LeuC and LeuD. [4Fe-4S] cluster serves as cofactor.

The catalysed reaction is (2R,3S)-3-isopropylmalate = (2S)-2-isopropylmalate. The protein operates within amino-acid biosynthesis; L-leucine biosynthesis; L-leucine from 3-methyl-2-oxobutanoate: step 2/4. Catalyzes the isomerization between 2-isopropylmalate and 3-isopropylmalate, via the formation of 2-isopropylmaleate. The protein is 3-isopropylmalate dehydratase large subunit of Staphylococcus aureus (strain MRSA252).